The sequence spans 150 residues: Arginine repressor (150 aa).

This sequence belongs to the ArgR family.

It localises to the cytoplasm. It participates in amino-acid biosynthesis; L-arginine biosynthesis [regulation]. Regulates arginine biosynthesis genes. This Clostridium botulinum (strain Eklund 17B / Type B) protein is Arginine repressor.